Reading from the N-terminus, the 230-residue chain is MQGKINYKDITQKEMFNEIFKEYVKEEKQIDLGTCDQDSVHDLWRRFVKRWNDGKMKSKWYSLGKRISQPSYARLVGPSRPTLENLQDRRELQEQLNELRKLSRKSAFKSQAKRETELLDEILPKEPAGSKEAMQQKKKEKRAALKHYREASDNEEDLKETDLYGDRDSFQSRLKQKKQRSEFRASKREMERLERDQELRNKIEERNKKELETIEKLRELAKARLQGFSS.

Positions 118–195 (LLDEILPKEP…SKREMERLER (78 aa)) are disordered. Over residues 136-146 (QKKKEKRAALK) the composition is skewed to basic residues. 2 stretches are compositionally biased toward basic and acidic residues: residues 160-170 (ETDLYGDRDSF) and 179-195 (QRSEFRASKREMERLER).

This is an uncharacterized protein from Schizosaccharomyces pombe (strain 972 / ATCC 24843) (Fission yeast).